A 158-amino-acid chain; its full sequence is Cyclic pyranopterin monophosphate synthase (158 aa).

Residues 74–76 (MCH) and 112–113 (ME) each bind substrate. Aspartate 127 is a catalytic residue.

This sequence belongs to the MoaC family. As to quaternary structure, homohexamer; trimer of dimers.

The enzyme catalyses (8S)-3',8-cyclo-7,8-dihydroguanosine 5'-triphosphate = cyclic pyranopterin phosphate + diphosphate. It participates in cofactor biosynthesis; molybdopterin biosynthesis. Its function is as follows. Catalyzes the conversion of (8S)-3',8-cyclo-7,8-dihydroguanosine 5'-triphosphate to cyclic pyranopterin monophosphate (cPMP). In Thermoanaerobacter sp. (strain X514), this protein is Cyclic pyranopterin monophosphate synthase.